Consider the following 206-residue polypeptide: High frequency lysogenization protein HflD homolog (206 aa).

This sequence belongs to the HflD family.

It localises to the cytoplasm. The protein resides in the cell inner membrane. In Ectopseudomonas mendocina (strain ymp) (Pseudomonas mendocina), this protein is High frequency lysogenization protein HflD homolog.